A 210-amino-acid chain; its full sequence is Ribosomal RNA small subunit methyltransferase G (210 aa).

S-adenosyl-L-methionine contacts are provided by residues Gly76, Met81, 127–128 (VE), and Arg145.

The protein belongs to the methyltransferase superfamily. RNA methyltransferase RsmG family.

It is found in the cytoplasm. The enzyme catalyses guanosine(527) in 16S rRNA + S-adenosyl-L-methionine = N(7)-methylguanosine(527) in 16S rRNA + S-adenosyl-L-homocysteine. Its function is as follows. Specifically methylates the N7 position of guanine in position 527 of 16S rRNA. This chain is Ribosomal RNA small subunit methyltransferase G, found in Acinetobacter baumannii (strain AB307-0294).